The following is a 224-amino-acid chain: MSDICDANKLKHRFRGYFPVVIDVETAGFNSQTDALLEIAVTLLKMDDEGMLGIDKTLHFHIEPFEGANLEPAALAFNGIDPNNPLRGAVSEKEAFLDIFKAVKKAQKAADCHRCIIVAHNAAFDHGFVSKAIERCDLKRSPFHPFATFDTATLAGLAIGHTVLAKACMMAGIPFDNKEAHSALYDTERTAELFCYIVNRWKQLGGWPLLAAAGAQDAESDTEE.

Residues 20-194 (VVIDVETAGF…YDTERTAELF (175 aa)) form the Exonuclease domain. Asp-23, Glu-25, His-181, and Asp-186 together coordinate Mg(2+). The active-site Proton donor/acceptor is the His-181.

It belongs to the RNase T family. Homodimer. It depends on Mg(2+) as a cofactor.

Functionally, trims short 3' overhangs of a variety of RNA species, leaving a one or two nucleotide 3' overhang. Responsible for the end-turnover of tRNA: specifically removes the terminal AMP residue from uncharged tRNA (tRNA-C-C-A). Also appears to be involved in tRNA biosynthesis. The chain is Ribonuclease T from Shewanella putrefaciens (strain CN-32 / ATCC BAA-453).